Here is a 236-residue protein sequence, read N- to C-terminus: Small ribosomal subunit protein uS2c (236 aa).

This sequence belongs to the universal ribosomal protein uS2 family.

The protein resides in the plastid. It localises to the chloroplast. The protein is Small ribosomal subunit protein uS2c (rps2) of Draba nemorosa (Woodland whitlowgrass).